A 306-amino-acid polypeptide reads, in one-letter code: ADP,ATP carrier protein ER-ANT1 (306 aa).

Solcar repeat units lie at residues 8 to 101 (ERFS…FKNL), 113 to 205 (KWFA…IKPI), and 213 to 299 (GNFL…LHQI). A run of 5 helical transmembrane segments spans residues 10 to 37 (FSAD…VKLL), 78 to 102 (QANV…KNLL), 111 to 131 (YLKW…TTSL), 181 to 202 (FGVS…YDTI), and 216 to 236 (LASF…AYPF). ADP is bound by residues arginine 83 and lysine 95. Position 240 (arginine 240) interacts with ADP. Positions 240-245 (RRRMML) are important for transport activity. A Nucleotide carrier signature motif motif is present at residues 240 to 245 (RRRMML). The chain crosses the membrane as a helical span at residues 276-296 (VTANMLLGVAGAGVLAGYDQL).

It belongs to the mitochondrial carrier (TC 2.A.29) family.

Its subcellular location is the endoplasmic reticulum membrane. It carries out the reaction ADP(in) + ATP(out) = ADP(out) + ATP(in). Its function is as follows. ADP:ATP antiporter that catalyzes the exchange of ADP and ATP across the endoplasmic reticulum membrane. This is ADP,ATP carrier protein ER-ANT1 (ER-ANT1) from Arabidopsis thaliana (Mouse-ear cress).